The primary structure comprises 311 residues: Asialoglycoprotein receptor 2 (311 aa).

Residues 1-44 (MAKDFQDIQQLSSEENDHPFHQGEGPGTRRLNPRRGNPFLKGPP) are disordered. Residues 1–58 (MAKDFQDIQQLSSEENDHPFHQGEGPGTRRLNPRRGNPFLKGPPPAQPLAQRLCSMVC) are Cytoplasmic-facing. The Endocytosis signal motif lies at 5 to 8 (FQDI). Position 13 is a phosphoserine (serine 13). Cysteine 54 carries the S-palmitoyl cysteine lipid modification. A helical; Signal-anchor for type II membrane protein transmembrane segment spans residues 59–79 (FSLLALSFNILLLVVICVTGS). Topologically, residues 80-311 (QSEGHGGAQL…KRRNATGEVA (232 aa)) are extracellular. Residues asparagine 102 and asparagine 170 are each glycosylated (N-linked (GlcNAc...) asparagine). In terms of domain architecture, C-type lectin spans 176 to 302 (CCPVNWVEHQ…LQVYRWVCEK (127 aa)). Cystine bridges form between cysteine 177–cysteine 188, cysteine 205–cysteine 300, and cysteine 278–cysteine 292. Residue asparagine 305 is glycosylated (N-linked (GlcNAc...) asparagine).

As to quaternary structure, the functioning ligand-binding unit of this receptor is thought to be at least a dimer. Interacts with LASS2. (Microbial infection) Interacts with hepatitis E virus capsid protein ORF2. In terms of tissue distribution, expressed exclusively in hepatic parenchymal cells.

The protein localises to the membrane. In terms of biological role, mediates the endocytosis of plasma glycoproteins to which the terminal sialic acid residue on their complex carbohydrate moieties has been removed. The receptor recognizes terminal galactose and N-acetylgalactosamine units. After ligand binding to the receptor, the resulting complex is internalized and transported to a sorting organelle, where receptor and ligand are disassociated. The receptor then returns to the cell membrane surface. This is Asialoglycoprotein receptor 2 (ASGR2) from Homo sapiens (Human).